We begin with the raw amino-acid sequence, 87 residues long: Small ribosomal subunit protein uS17 (87 aa).

The protein belongs to the universal ribosomal protein uS17 family. Part of the 30S ribosomal subunit.

In terms of biological role, one of the primary rRNA binding proteins, it binds specifically to the 5'-end of 16S ribosomal RNA. The sequence is that of Small ribosomal subunit protein uS17 from Lacticaseibacillus casei (strain BL23) (Lactobacillus casei).